A 167-amino-acid chain; its full sequence is Small ribosomal subunit protein mS25 (167 aa).

The protein belongs to the mitochondrion-specific ribosomal protein mS25 family. As to quaternary structure, component of the mitochondrial ribosome small subunit (28S) which comprises a 12S rRNA and about 30 distinct proteins.

It is found in the mitochondrion. This chain is Small ribosomal subunit protein mS25 (mRpS25), found in Drosophila melanogaster (Fruit fly).